Reading from the N-terminus, the 732-residue chain is B-cadherin (732 aa).

Positions leucine 1–arginine 6 are excised as a propeptide. Cadherin domains follow at residues arginine 6–phenylalanine 114, threonine 115–phenylalanine 227, aspartate 228–phenylalanine 339, aspartate 340–histidine 443, and glycine 444–threonine 554. Residues arginine 6 to threonine 554 are Extracellular-facing. A glycan (N-linked (GlcNAc...) asparagine) is linked at asparagine 137. Residue asparagine 410 is glycosylated (N-linked (GlcNAc...) asparagine). The helical transmembrane segment at glycine 555–valine 580 threads the bilayer. Residues arginine 581–glutamate 732 are Cytoplasmic-facing.

Expressed in a wide variety of tissues.

The protein resides in the cell membrane. Functionally, cadherins are calcium-dependent cell adhesion proteins. They preferentially interact with themselves in a homophilic manner in connecting cells; cadherins may thus contribute to the sorting of heterogeneous cell types. B-cadherin may have important functions in neurogenesis, in at least some epithelia, and in embryogenesis. The polypeptide is B-cadherin (K-CAM) (Gallus gallus (Chicken)).